A 112-amino-acid polypeptide reads, in one-letter code: Conotoxin vil14.5 (112 aa).

Positions 1-22 (MGFRVLVLVVMATTSALPFTFS) are cleaved as a signal peptide. The propeptide occupies 23–85 (EEPGRSPFRP…FAELSVGQRR (63 aa)). The tract at residues 53–74 (RADGQPPDMRQPEMRRPEVRQP) is disordered. A compositionally biased stretch (basic and acidic residues) spans 62–74 (RQPEMRRPEVRQP). 2 disulfides stabilise this stretch: Cys-91-Cys-111 and Cys-95-Cys-107.

This sequence belongs to the conotoxin R superfamily. In terms of tissue distribution, expressed by the venom duct.

It localises to the secreted. In Conus villepinii (Villepin's cone), this protein is Conotoxin vil14.5.